We begin with the raw amino-acid sequence, 61 residues long: Short neurotoxin 2 (61 aa).

Disulfide bonds link Cys3–Cys23, Cys17–Cys40, Cys42–Cys53, and Cys54–Cys59.

It belongs to the three-finger toxin family. Short-chain subfamily. Type I alpha-neurotoxin sub-subfamily. In terms of tissue distribution, expressed by the venom gland.

It localises to the secreted. Functionally, binds to muscle nicotinic acetylcholine receptor (nAChR) and inhibit acetylcholine from binding to the receptor, thereby impairing neuromuscular transmission. The chain is Short neurotoxin 2 from Naja haje haje (Egyptian cobra).